A 252-amino-acid polypeptide reads, in one-letter code: Transcriptional regulatory protein HptR (252 aa).

Residues 3–118 (KVVICDDERI…QLEVILGRLV (116 aa)) form the Response regulatory domain. 4-aspartylphosphate is present on aspartate 55. Positions 153 to 250 (NQIVDQIKQS…QMAPSDYCKQ (98 aa)) constitute an HTH araC/xylS-type domain. 2 consecutive DNA-binding regions (H-T-H motif) follow at residues 170-191 (SDLI…KDHV) and 217-240 (HYEI…KKYL).

Post-translationally, phosphorylated by HptS.

The protein localises to the cytoplasm. Functionally, member of the two-component regulatory system HptS/HptR that regulates genes involved in hexose phosphate transport system in response to changes in extracellular phosphate sources. Activates uhpT expression to facilitate glucose-6-phosphate/G6P utilization by directly binding to its promoter. Antagonizes CcpA-dependent transcription of a subset of CcpA-regulated genes involved in antibiotic susceptibility. The chain is Transcriptional regulatory protein HptR (hptR) from Staphylococcus aureus (strain bovine RF122 / ET3-1).